The chain runs to 237 residues: Phosphoserine phosphatase (237 aa).

The Nucleophile role is filled by D30. Mg(2+) is bound by residues D30 and D32. D32 acts as the Proton donor in catalysis. Substrate is bound by residues E39, R76, 120–121 (SG), and K169. D192 is a Mg(2+) binding site. Residue N195 participates in substrate binding.

It belongs to the HAD-like hydrolase superfamily. SerB family. Requires Mg(2+) as cofactor.

The enzyme catalyses O-phospho-L-serine + H2O = L-serine + phosphate. The catalysed reaction is O-phospho-D-serine + H2O = D-serine + phosphate. It participates in amino-acid biosynthesis; L-serine biosynthesis; L-serine from 3-phospho-D-glycerate: step 3/3. Functionally, catalyzes the dephosphorylation of phosphoserine (P-Ser) in vitro. Also catalyzes the dephosphorylation of phosphothreonine (P-Thr) in vitro. In Albidiferax ferrireducens (strain ATCC BAA-621 / DSM 15236 / T118) (Rhodoferax ferrireducens), this protein is Phosphoserine phosphatase.